Consider the following 205-residue polypeptide: Venom allergen 5 (205 aa).

4 disulfide bridges follow: cysteine 4-cysteine 16, cysteine 8-cysteine 104, cysteine 28-cysteine 96, and cysteine 171-cysteine 188. The SCP domain maps to 47 to 190; sequence VNEHNRFRQK…MQHHYLICNY (144 aa).

It belongs to the CRISP family. Venom allergen 5-like subfamily. As to expression, expressed by the venom gland.

It localises to the secreted. The protein is Venom allergen 5 of Polistes fuscatus (Paper wasp).